Reading from the N-terminus, the 216-residue chain is RNA pyrophosphohydrolase (216 aa).

Residues 6 to 149 (GFRPNVGIIL…KRDVYQLALT (144 aa)) form the Nudix hydrolase domain. A Nudix box motif is present at residues 38–59 (GGIKYGETPMQAMYRELHEETG). Residues 159–180 (AQRTDKSRGPRAPRYPRVSNGH) form a disordered region.

Belongs to the Nudix hydrolase family. RppH subfamily. Requires a divalent metal cation as cofactor.

Accelerates the degradation of transcripts by removing pyrophosphate from the 5'-end of triphosphorylated RNA, leading to a more labile monophosphorylated state that can stimulate subsequent ribonuclease cleavage. The chain is RNA pyrophosphohydrolase from Burkholderia thailandensis (strain ATCC 700388 / DSM 13276 / CCUG 48851 / CIP 106301 / E264).